Consider the following 394-residue polypeptide: Phosphoglycerate kinase (394 aa).

Substrate is bound by residues D21–N23, R37, H60–R63, R115, and R148. ATP contacts are provided by residues K199, E321, and G347–T350.

Belongs to the phosphoglycerate kinase family. As to quaternary structure, monomer.

The protein resides in the cytoplasm. It catalyses the reaction (2R)-3-phosphoglycerate + ATP = (2R)-3-phospho-glyceroyl phosphate + ADP. It functions in the pathway carbohydrate degradation; glycolysis; pyruvate from D-glyceraldehyde 3-phosphate: step 2/5. The polypeptide is Phosphoglycerate kinase (Azoarcus sp. (strain BH72)).